Consider the following 215-residue polypeptide: Urease accessory protein UreG (215 aa).

24 to 31 contacts GTP; that stretch reads GPVGSGKT.

This sequence belongs to the SIMIBI class G3E GTPase family. UreG subfamily. As to quaternary structure, homodimer. UreD, UreF and UreG form a complex that acts as a GTP-hydrolysis-dependent molecular chaperone, activating the urease apoprotein by helping to assemble the nickel containing metallocenter of UreC. The UreE protein probably delivers the nickel.

The protein localises to the cytoplasm. Functionally, facilitates the functional incorporation of the urease nickel metallocenter. This process requires GTP hydrolysis, probably effectuated by UreG. This is Urease accessory protein UreG from Burkholderia orbicola (strain MC0-3).